We begin with the raw amino-acid sequence, 218 residues long: Probable transaldolase (218 aa).

The Schiff-base intermediate with substrate role is filled by lysine 83.

It belongs to the transaldolase family. Type 3B subfamily.

Its subcellular location is the cytoplasm. The catalysed reaction is D-sedoheptulose 7-phosphate + D-glyceraldehyde 3-phosphate = D-erythrose 4-phosphate + beta-D-fructose 6-phosphate. Its pathway is carbohydrate degradation; pentose phosphate pathway; D-glyceraldehyde 3-phosphate and beta-D-fructose 6-phosphate from D-ribose 5-phosphate and D-xylulose 5-phosphate (non-oxidative stage): step 2/3. Functionally, transaldolase is important for the balance of metabolites in the pentose-phosphate pathway. This chain is Probable transaldolase, found in Thermotoga sp. (strain RQ2).